The sequence spans 277 residues: Cis-3,4-dihydrophenanthrene-3,4-diol dehydrogenase (277 aa).

Residues 10–37 (FLTGGVAGLGRALVKRLVEEGANVTVLD) and D60 each bind NAD(+). A substrate-binding site is contributed by S143. Catalysis depends on Y156, which acts as the Proton acceptor. K160 is an NAD(+) binding site.

It belongs to the short-chain dehydrogenases/reductases (SDR) family. Homotetramer.

The catalysed reaction is (3S,4R)-3,4-dihydrophenanthrene-3,4-diol + NAD(+) = phenanthrene-3,4-diol + NADH + H(+). Its activity is regulated as follows. Inhibited by heavy metal such as Hg(2+) and by p-chloromercuribenzoate. Its function is as follows. Involved in the degradation of phenanthrene. Catalyzes the oxidation of cis-phenanthrene dihydrodiol (PDD) to yield phenanthrenediol. It can use either NAD or NADP as electron acceptor, however NAD is preferred to NADP. The protein is Cis-3,4-dihydrophenanthrene-3,4-diol dehydrogenase (phnB) of Alcaligenes faecalis.